The following is a 97-amino-acid chain: MSDYTRANFGGLSEGEAQFSMTARALLDELTDLEGKLRAKLDRWDGDAQAAYWNYQKEWDAAAKDMQNVVAQLGVAIREAHDNYQAAERANTSIWAG.

Belongs to the WXG100 family. ESAT-6 subfamily. Forms a tight 1:1 complex with EsxB. Forms a complex with EccC and EsxB, probably wholly mediated by EsxB.

The protein localises to the secreted. May help regulate assembly and function of the type VII secretion system (T7SS). EsxA disassembles pre-formed EccC-EsxB multimers, possibly by making EccC-EsxA-EsxB trimers instead of EccC-EsxB-EsxB-EccC tetramers. The sequence is that of ESAT-6-like protein EsxA from Thermomonospora curvata (strain ATCC 19995 / DSM 43183 / JCM 3096 / KCTC 9072 / NBRC 15933 / NCIMB 10081 / Henssen B9).